A 154-amino-acid polypeptide reads, in one-letter code: Metallothiol transferase FosB (154 aa).

The 116-residue stretch at 8 to 123 (GINHLLFSVS…DGHKFELHTG (116 aa)) folds into the VOC domain. Positions 11, 70, and 119 each coordinate Mg(2+). E119 serves as the catalytic Proton donor/acceptor.

The protein belongs to the fosfomycin resistance protein family. FosB subfamily. Homodimer. Requires Mg(2+) as cofactor.

The protein resides in the cytoplasm. Its function is as follows. Metallothiol transferase which confers resistance to fosfomycin by catalyzing the addition of a thiol cofactor to fosfomycin. L-cysteine is probably the physiological thiol donor. This chain is Metallothiol transferase FosB, found in Bacillus licheniformis (strain ATCC 14580 / DSM 13 / JCM 2505 / CCUG 7422 / NBRC 12200 / NCIMB 9375 / NCTC 10341 / NRRL NRS-1264 / Gibson 46).